The sequence spans 643 residues: Very long-chain fatty acid transport protein (643 aa).

Residues Met1–Glu15 lie on the Cytoplasmic side of the membrane. A helical membrane pass occupies residues Leu16–Ala36. The Extracellular segment spans residues Tyr37–His138. The chain crosses the membrane as a helical span at residues Leu139–Leu159. The Cytoplasmic portion of the chain corresponds to Thr160 to Ser249. Tyr235–Val246 serves as a coordination point for ATP. The stretch at Thr250–Ala318 is an intramembrane region. At Asn319–Leu643 the chain is on the cytoplasmic side. Positions Asp477–Gln525 match the FACS motif.

This sequence belongs to the ATP-dependent AMP-binding enzyme family.

It localises to the lipid droplet. It is found in the cell membrane. Its subcellular location is the peroxisome membrane. The protein localises to the peroxisome. The catalysed reaction is a very long-chain fatty acid + ATP + CoA = a very long-chain fatty acyl-CoA + AMP + diphosphate. Functionally, acyl-CoA synthetase required for both the import of long chain fatty acids (LCFAs) (C14-C18) and the activation very long chain fatty acids (VLCFAs) (C20-C26) by esterification of the fatty acids into metabolically active CoA-thioesters for subsequent degradation or incorporation into phospholipids. The transport and fatty acyl-CoA synthetase activities are genetically separable and are thus independent activities. Esterifies VLCFAs in the peroxisome matrix. The VLCFAs are actively transported into peroxisomes by a PXA1-PXA2 heterodimeric transporter in the peroxisomal membrane. The polypeptide is Very long-chain fatty acid transport protein (FAT1) (Cochliobolus heterostrophus (Southern corn leaf blight fungus)).